A 348-amino-acid chain; its full sequence is Phospho-2-dehydro-3-deoxyheptonate aldolase, Trp-sensitive (348 aa).

The protein belongs to the class-I DAHP synthase family.

It catalyses the reaction D-erythrose 4-phosphate + phosphoenolpyruvate + H2O = 7-phospho-2-dehydro-3-deoxy-D-arabino-heptonate + phosphate. It functions in the pathway metabolic intermediate biosynthesis; chorismate biosynthesis; chorismate from D-erythrose 4-phosphate and phosphoenolpyruvate: step 1/7. In terms of biological role, stereospecific condensation of phosphoenolpyruvate (PEP) and D-erythrose-4-phosphate (E4P) giving rise to 3-deoxy-D-arabino-heptulosonate-7-phosphate (DAHP). In Salmonella typhimurium (strain LT2 / SGSC1412 / ATCC 700720), this protein is Phospho-2-dehydro-3-deoxyheptonate aldolase, Trp-sensitive (aroH).